The primary structure comprises 338 residues: Taste receptor type 2 member 39 (338 aa).

Residues 1 to 30 (MLGRCFPPNTKEKQQLRMIKLCDPAESELS) lie on the Extracellular side of the membrane. A helical transmembrane segment spans residues 31-51 (PFLITLTLAVLLAEYLTGIIA). The Cytoplasmic portion of the chain corresponds to 52–74 (NGFITAIHAAECVQNKSVSTSGR). The chain crosses the membrane as a helical span at residues 75 to 95 (ILVFLSVSRIALQSLMMLEIT). Residues 96–116 (ISSTSLSFYSEDTVYYAFKIS) lie on the Extracellular side of the membrane. Residues 117–137 (FIFLNFCSLWFAAWLSFFYFV) traverse the membrane as a helical segment. The Cytoplasmic portion of the chain corresponds to 138–156 (KIANFSYPLFLKLRWRISG). The chain crosses the membrane as a helical span at residues 157 to 177 (LIPWLLWLSVFISFSHSMFCI). Topologically, residues 178-205 (NICTGYCDNSFPIHSSNSTEKTYFSEIS) are extracellular. An N-linked (GlcNAc...) asparagine glycan is attached at Asn194. The chain crosses the membrane as a helical span at residues 206–226 (VVSLAFFFNLGIVIPLIMFIL). Over 227–262 (AAILLILSLKRHTLYMXSNATGSKDPSMEAHIGAIK) the chain is Cytoplasmic. Residues 263 to 283 (ATSYFLILYIFNAVALFIYLS) traverse the membrane as a helical segment. Residues 284-291 (NMFDINSL) lie on the Extracellular side of the membrane. The chain crosses the membrane as a helical span at residues 292–312 (WNTLCQIIMAAYPASHSILLI). Residues 313–338 (KDNPGLRRAWKQLQHRLHLYPKEWTL) are Cytoplasmic-facing.

The protein belongs to the G-protein coupled receptor T2R family.

It is found in the membrane. Its function is as follows. Receptor that may play a role in the perception of bitterness and is gustducin-linked. May play a role in sensing the chemical composition of the gastrointestinal content. The activity of this receptor may stimulate alpha gustducin, mediate PLC-beta-2 activation and lead to the gating of TRPM5. This is Taste receptor type 2 member 39 (TAS2R39) from Papio hamadryas (Hamadryas baboon).